The primary structure comprises 1141 residues: IgM protease (1141 aa).

The first 32 residues, 1–32, serve as a signal peptide directing secretion; that stretch reads MNIQERFSLRKSAVGLVSVSLLCAIYTSTVAA. The active-site Nucleophile is the cysteine 195. Disordered regions lie at residues 518-544, 725-749, 781-805, and 839-860; these read PDLPVGDRSTVSDVDSLSSQETSSTNL, EKDSIQAGETEIAEPTSSESTNVET, LEKDSIQAGETEIAEPTSSESTNVE, and EKDSIQAGETEIAEPTSSESTS. Polar residues predominate over residues 526–544; that stretch reads STVSDVDSLSSQETSSTNL. Composition is skewed to low complexity over residues 738–749 and 795–805; these read EPTSSESTNVET and EPTSSESTNVE. Residues 1119-1136 traverse the membrane as a helical segment; the sequence is IMGVGLLTLVLGSALGLL.

This sequence belongs to the peptidase C66 family.

The protein resides in the cell membrane. Its subcellular location is the secreted. Its activity is regulated as follows. IgM cleavage is inhibited by iodoacetamide but not by AEBSF, bestatin, E-64, Z-LVG-CHN(2), or EDTA. In terms of biological role, catalyzes the specific cleavage of porcine IgM bound to the bacterial surface. Can degrade only IgM but neither IgG nor IgA, and is host specific, as it exclusively cleaves porcine IgM but not IgM from six other species, including human, mouse and a closely related member of the Suidae family. Promotes survival in porcine blood. Is thus involved in a so-far-unknown mechanism of host-pathogen interaction at an early stage of the host immune response. This is IgM protease (ide) from Streptococcus suis (strain P1/7).